A 30-amino-acid polypeptide reads, in one-letter code: Ranatuerin-2OK (30 aa).

A disulfide bridge links C23 with C30.

As to expression, expressed by the skin glands.

The protein localises to the secreted. Antimicrobial peptide. Active against Gram-negative bacterium E.coli (MIC=12.5 uM) and against Gram-positive bacterium S.aureus (MIC=50 uM). This Nidirana okinavana (Kampira Falls frog) protein is Ranatuerin-2OK.